Consider the following 265-residue polypeptide: Phosphonates import ATP-binding protein PhnC 1 (265 aa).

Positions 3 to 247 (LRLSGIELRH…HLDTLYANEQ (245 aa)) constitute an ABC transporter domain. 36–43 (GPSGAGKT) is a binding site for ATP. The segment at 245–265 (NEQLSPQPAPDVSETPWTPRC) is disordered.

The protein belongs to the ABC transporter superfamily. Phosphonates importer (TC 3.A.1.9.1) family. As to quaternary structure, the complex is composed of two ATP-binding proteins (PhnC), two transmembrane proteins (PhnE) and a solute-binding protein (PhnD).

Its subcellular location is the cell inner membrane. It carries out the reaction phosphonate(out) + ATP + H2O = phosphonate(in) + ADP + phosphate + H(+). In terms of biological role, part of the ABC transporter complex PhnCDE involved in phosphonates import. Responsible for energy coupling to the transport system. The polypeptide is Phosphonates import ATP-binding protein PhnC 1 (Pseudomonas savastanoi pv. phaseolicola (strain 1448A / Race 6) (Pseudomonas syringae pv. phaseolicola (strain 1448A / Race 6))).